The following is a 375-amino-acid chain: Peroxisomal targeting signal 2 receptor (375 aa).

WD repeat units follow at residues 58-89 (LTQDCLFDLAWNESHENQVLVAQGDGTLRLFD), 102-133 (EHEREVFSCNWNLVNRQNFLSSSWDGSIKIWS), 172-203 (KNRNCVYQAQFSPHDQNLVLSCSGNSYASLFD), 218-249 (HSGLEALTCDFNKYRPYVVATGGVDNAIRIWD), 281-312 (AHGLAIRKVTWSPHHSNILMSASYDMTCRIWR), and 340-372 (QHSEFVFGADWSLWGKPGYVASTAWDGNLFVWN).

Belongs to the WD repeat peroxin-7 family. In terms of assembly, interacts with PEX21.

It is found in the cytoplasm. The protein localises to the cytosol. Its subcellular location is the peroxisome matrix. In terms of biological role, receptor required for the peroxisomal import of proteins containing a C-terminal PTS2-type peroxisomal targeting signal, such as 3-oxoacyl-CoA thiolase. Specifically binds to cargo proteins containing a PTS2 peroxisomal targeting signal in the cytosol. Cargo protein-binding triggers interaction with PEX21 and formation of a ternary complex composed of PEX21 and PEX7 along with PTS2-containing cargo proteins, which is tranlocated into peroxisomes by passing through the PEX13-PEX14 docking complex. This is Peroxisomal targeting signal 2 receptor from Saccharomyces cerevisiae (strain ATCC 204508 / S288c) (Baker's yeast).